Here is a 174-residue protein sequence, read N- to C-terminus: MVEPKKPFMRKPPPKTGDKKPGDRKANRRGAARLAAVQALYQMDIGGAGIDDTFAEFESHWIGNEVEGDQYLPAEAAFFRDIVSGVVRDQTKLDPLIDEALAKGWPLARIDAIIRAVMRAGAYELEHRKDIPARVVVSEYVDVAHAFVEKDETGMVNAVLDQIARQFRADEFTK.

The interval 1–28 (MVEPKKPFMRKPPPKTGDKKPGDRKANR) is disordered. Residues 16-25 (TGDKKPGDRK) show a composition bias toward basic and acidic residues.

Belongs to the NusB family.

Functionally, involved in transcription antitermination. Required for transcription of ribosomal RNA (rRNA) genes. Binds specifically to the boxA antiterminator sequence of the ribosomal RNA (rrn) operons. The chain is Transcription antitermination protein NusB from Rhodopseudomonas palustris (strain BisB5).